A 493-amino-acid chain; its full sequence is Glutamyl-tRNA(Gln) amidotransferase subunit A (493 aa).

Residues lysine 79 and serine 159 each act as charge relay system in the active site. Catalysis depends on serine 183, which acts as the Acyl-ester intermediate.

The protein belongs to the amidase family. GatA subfamily. In terms of assembly, heterotrimer of A, B and C subunits.

The enzyme catalyses L-glutamyl-tRNA(Gln) + L-glutamine + ATP + H2O = L-glutaminyl-tRNA(Gln) + L-glutamate + ADP + phosphate + H(+). Allows the formation of correctly charged Gln-tRNA(Gln) through the transamidation of misacylated Glu-tRNA(Gln) in organisms which lack glutaminyl-tRNA synthetase. The reaction takes place in the presence of glutamine and ATP through an activated gamma-phospho-Glu-tRNA(Gln). The protein is Glutamyl-tRNA(Gln) amidotransferase subunit A of Brucella melitensis biotype 2 (strain ATCC 23457).